Here is a 785-residue protein sequence, read N- to C-terminus: Probable ATP-dependent RNA helicase ddx17 (785 aa).

Composition is skewed to low complexity over residues 1–11 (MSYNSSNSGSG), 18–37 (SGNS…GNRS), 49–95 (SYNR…YGPS), and 105–177 (GSSS…NGYS). Residues 1 to 233 (MSYNSSNSGS…TPSTSYNGGS (233 aa)) form a disordered region. The segment covering 178 to 191 (KPTSNYSYSNGYTG) has biased composition (polar residues). Positions 192-233 (PTTNYSSYSNGYSTPPTSTSTSSSSTTTTTTTTPSTSYNGGS) are enriched in low complexity. Positions 384–412 (MQFTQAPFPGYLMKEIIGAGFPNPTPIQS) match the Q motif motif. In terms of domain architecture, Helicase ATP-binding spans 415-590 (WPIALKGRDI…HDFLTDHIQV (176 aa)). Position 428–435 (428–435 (AKTGSGKT)) interacts with ATP. A DEAD box motif is present at residues 538–541 (DEAD). The region spanning 602 to 763 (NVRQIVEVCQ…KIPIELSNLS (162 aa)) is the Helicase C-terminal domain. Polar residues predominate over residues 764 to 774 (VTPSTSSNTKK). The tract at residues 764-785 (VTPSTSSNTKKFSPYPTYSKRY) is disordered.

Belongs to the DEAD box helicase family. DDX5/DBP2 subfamily.

Its subcellular location is the cytoplasm. The protein localises to the nucleus. The catalysed reaction is ATP + H2O = ADP + phosphate + H(+). In terms of biological role, probable ATP-dependent RNA helicase which may be involved nonsense-mediated mRNA decay and ribosome biogenesis through rRNA processing. This is Probable ATP-dependent RNA helicase ddx17 (ddx17) from Dictyostelium discoideum (Social amoeba).